The following is a 193-amino-acid chain: Dirigent protein (193 aa).

The first 29 residues, 1–29, serve as a signal peptide directing secretion; sequence MGGEKAFSFIFLLFLCFFLANLSASSAHP. Residues Cys40 and Cys192 are joined by a disulfide bond. N-linked (GlcNAc...) asparagine glycans are attached at residues Asn59 and Asn129.

This sequence belongs to the plant dirigent protein family. Homodimer. Expressed in rhizomes, stems, and leaves.

The protein resides in the secreted. It is found in the extracellular space. Its subcellular location is the apoplast. It participates in aromatic compound metabolism; phenylpropanoid biosynthesis. Dirigent proteins impart stereoselectivity on the phenoxy radical-coupling reaction, yielding optically active lignans from two molecules of coniferyl alcohol in the biosynthesis of lignans, flavonolignans, and alkaloids and thus plays a central role in plant secondary metabolism. Also involved in the biosynthesis of etoposide, a chemotherapeutic compound of the topoisomerase inhibitor family. This chain is Dirigent protein, found in Sinopodophyllum hexandrum (Himalayan may apple).